We begin with the raw amino-acid sequence, 329 residues long: MKRQNIRTLSLIVCTLTYLLVGAAVFDALETENEILQRKLVQRVREKLKTKYNMSNADYEILEATIVKSVPHKAGYQWKFSGAFYFATTVITTIGYGHSTPMTDAGKVFCMLYALAGIPLGLIMFQSIGERMNTFAAKLLRFIRRAAGKQPIVTSSDLIIFCTGWGGLLIFGGAFMFSSYENWTYFDAVYYCFVTLTTIGFGDYVALQKRGSLQTQPEYVFFSLVFILFGLTVISAAMNLLVLRFLTMNTEDERRDEQEAILAAQGLVRVGDPTADDDFGRLPLSDNVSLASCSCYQLPDEKLRHRHRKHTEPHGGPPTFSGMTTRPKY.

The Cytoplasmic portion of the chain corresponds to 1-8 (MKRQNIRT). A helical transmembrane segment spans residues 9-29 (LSLIVCTLTYLLVGAAVFDAL). N-linked (GlcNAc...) asparagine glycosylation occurs at Asn53. Positions 80-100 (FSGAFYFATTVITTIGYGHST) form an intramembrane region, pore-forming. Residues 93–98 (TIGYGH) carry the Selectivity filter motif. A helical membrane pass occupies residues 108–128 (VFCMLYALAGIPLGLIMFQSI). At 129-157 (GERMNTFAAKLLRFIRRAAGKQPIVTSSD) the chain is on the cytoplasmic side. The chain crosses the membrane as a helical span at residues 158 to 178 (LIIFCTGWGGLLIFGGAFMFS). Asn182 is a glycosylation site (N-linked (GlcNAc...) asparagine). The segment at residues 186-206 (FDAVYYCFVTLTTIGFGDYVA) is an intramembrane region (pore-forming). The Selectivity filter signature appears at 198–203 (TIGFGD). The chain crosses the membrane as a helical span at residues 220–240 (VFFSLVFILFGLTVISAAMNL). The Cytoplasmic portion of the chain corresponds to 241–329 (LVLRFLTMNT…FSGMTTRPKY (89 aa)). The interval 289–296 (SLASCSCY) is may be important for regulation by and/or interaction with sup-10. A disordered region spans residues 307–329 (HRKHTEPHGGPPTFSGMTTRPKY).

It belongs to the two pore domain potassium channel (TC 1.A.1.8) family. May form a complex with the regulatory subunits unc-93 and sup-10. As to expression, low levels along surface of body-wall muscle cells, in vulval and intestinal muscles and, more weakly, in anal depressor and sphincter muscles. Also expressed in a subset of head neurons.

The protein resides in the membrane. In terms of biological role, potassium channel involved in coordination of muscle contraction. Activity is regulated by sup-18. The protein is Two pore potassium channel protein sup-9 of Caenorhabditis elegans.